We begin with the raw amino-acid sequence, 386 residues long: Putative membrane-bound transacylase BcsY (386 aa).

10 helical membrane-spanning segments follow: residues 37 to 57 (LAIA…FIGV), 91 to 111 (LLPA…WWVL), 118 to 138 (IALN…SGHV), 156 to 176 (LSLE…LPLT), 181 to 201 (LVLS…WHTG), 237 to 257 (AVYA…PLSY), 258 to 278 (ACPS…IMLP), 290 to 310 (LSPL…GIVV), 322 to 342 (AMMA…YVLV), and 362 to 382 (AALL…ISHV).

This sequence belongs to the acyltransferase 3 family.

It localises to the cell inner membrane. It functions in the pathway glycan metabolism; bacterial cellulose biosynthesis. May acylate a glucose moiety into cellulose fibrils, in cooperation with BcsABII and BcsCII. In Komagataeibacter xylinus (Gluconacetobacter xylinus), this protein is Putative membrane-bound transacylase BcsY (bcsY).